A 276-amino-acid chain; its full sequence is Large ribosomal subunit protein uL2 (276 aa).

Positions 224–276 (VMNPVDHPHGGGEGKAPIGRKSPMTPWGKPTLGFKTRKKKNKSDKFIIRRRKK) are disordered. Residues 258–276 (KTRKKKNKSDKFIIRRRKK) show a composition bias toward basic residues.

This sequence belongs to the universal ribosomal protein uL2 family. In terms of assembly, part of the 50S ribosomal subunit. Forms a bridge to the 30S subunit in the 70S ribosome.

Its function is as follows. One of the primary rRNA binding proteins. Required for association of the 30S and 50S subunits to form the 70S ribosome, for tRNA binding and peptide bond formation. It has been suggested to have peptidyltransferase activity; this is somewhat controversial. Makes several contacts with the 16S rRNA in the 70S ribosome. This is Large ribosomal subunit protein uL2 from Geobacillus sp. (strain WCH70).